A 404-amino-acid polypeptide reads, in one-letter code: Glucose-1-phosphate adenylyltransferase (404 aa).

Alpha-D-glucose 1-phosphate contacts are provided by residues Tyr-99, Gly-164, 179 to 180, and Ser-197; that span reads EK.

It belongs to the bacterial/plant glucose-1-phosphate adenylyltransferase family. As to quaternary structure, homotetramer.

The catalysed reaction is alpha-D-glucose 1-phosphate + ATP + H(+) = ADP-alpha-D-glucose + diphosphate. It participates in glycan biosynthesis; glycogen biosynthesis. In terms of biological role, involved in the biosynthesis of ADP-glucose, a building block required for the elongation reactions to produce glycogen. Catalyzes the reaction between ATP and alpha-D-glucose 1-phosphate (G1P) to produce pyrophosphate and ADP-Glc. The sequence is that of Glucose-1-phosphate adenylyltransferase from Rhodococcus erythropolis (strain PR4 / NBRC 100887).